A 107-amino-acid polypeptide reads, in one-letter code: Protamine-2 (107 aa).

The segment at 1–94 is disordered; that stretch reads MVRYRMRSPS…RRGCRRSRRR (94 aa). Phosphoserine occurs at positions 8, 10, and 33. Positions 43–94 are enriched in basic residues; sequence THRGHHHHRHRRCSRKRLHRIHKRRRSCRRRRRHSCRHRRRHRRGCRRSRRR.

It belongs to the protamine P2 family. Interacts with TDRP. Post-translationally, proteolytic processing into mature chains is required for histone eviction during spermatogenesis. Transition proteins (TNP1 and TNP2) are required for processing. As to expression, expressed in spermatids (at protein level).

It is found in the nucleus. The protein localises to the chromosome. Functionally, protamines substitute for histones in the chromatin of sperm during the haploid phase of spermatogenesis. They compact sperm DNA into a highly condensed, stable and inactive complex. The protein is Protamine-2 (Prm2) of Mus musculus (Mouse).